Consider the following 299-residue polypeptide: CDP-abequose synthase (299 aa).

Threonine 117 provides a ligand contact to substrate. The active-site Proton acceptor is tyrosine 134.

This sequence belongs to the NAD(P)-dependent epimerase/dehydratase family.

The catalysed reaction is CDP-alpha-D-abequose + NADP(+) = CDP-4-dehydro-3,6-dideoxy-alpha-D-glucose + NADPH + H(+). It participates in bacterial outer membrane biogenesis; LPS O-antigen biosynthesis. In Salmonella typhimurium (strain LT2 / SGSC1412 / ATCC 700720), this protein is CDP-abequose synthase (rfbJ).